Here is a 484-residue protein sequence, read N- to C-terminus: Protein nucleotidyltransferase YdiU (484 aa).

Gly-87, Gly-89, Arg-90, Lys-110, Asp-122, Gly-123, Arg-173, and Arg-180 together coordinate ATP. Residue Asp-249 is the Proton acceptor of the active site. Mg(2+) contacts are provided by Asn-250 and Asp-259. ATP is bound at residue Asp-259. The tract at residues Glu-463–Thr-484 is disordered.

It belongs to the SELO family. Requires Mg(2+) as cofactor. The cofactor is Mn(2+).

It catalyses the reaction L-seryl-[protein] + ATP = 3-O-(5'-adenylyl)-L-seryl-[protein] + diphosphate. It carries out the reaction L-threonyl-[protein] + ATP = 3-O-(5'-adenylyl)-L-threonyl-[protein] + diphosphate. The catalysed reaction is L-tyrosyl-[protein] + ATP = O-(5'-adenylyl)-L-tyrosyl-[protein] + diphosphate. The enzyme catalyses L-histidyl-[protein] + UTP = N(tele)-(5'-uridylyl)-L-histidyl-[protein] + diphosphate. It catalyses the reaction L-seryl-[protein] + UTP = O-(5'-uridylyl)-L-seryl-[protein] + diphosphate. It carries out the reaction L-tyrosyl-[protein] + UTP = O-(5'-uridylyl)-L-tyrosyl-[protein] + diphosphate. Functionally, nucleotidyltransferase involved in the post-translational modification of proteins. It can catalyze the addition of adenosine monophosphate (AMP) or uridine monophosphate (UMP) to a protein, resulting in modifications known as AMPylation and UMPylation. In Geobacillus kaustophilus (strain HTA426), this protein is Protein nucleotidyltransferase YdiU.